The following is a 348-amino-acid chain: Phosphatidylinositol 3,4,5-trisphosphate 3-phosphatase ptn1 (348 aa).

Positions 18-189 (EKVNRSFAYL…YYIEILKQFP (172 aa)) constitute a Phosphatase tensin-type domain. Residue Cys-129 is the Phosphocysteine intermediate of the active site.

Its subcellular location is the cytoplasmic vesicle. The catalysed reaction is a 1,2-diacyl-sn-glycero-3-phospho-(1D-myo-inositol-3,4,5-trisphosphate) + H2O = a 1,2-diacyl-sn-glycero-3-phospho-(1D-myo-inositol-4,5-bisphosphate) + phosphate. The enzyme catalyses 1,2-dioctanoyl-sn-glycero-3-phospho-(1D-myo-inositol-3,4,5-trisphosphate) + H2O = 1,2-dioctanoyl-sn-glycero-3-phospho-(1D-myo-inositol-4,5-bisphosphate) + phosphate. It catalyses the reaction 1,2-dihexadecanoyl-sn-glycero-3-phospho-(1D-myo-inositol-3,4,5-trisphosphate) + H2O = 1,2-dihexadecanoyl-sn-glycero-3-phospho-(1D-myo-inositol-4,5-bisphosphate) + phosphate. In terms of biological role, acts as a phosphoinositide 3-phosphatase and regulates PtdIns(3,4,5)P3 levels. The sequence is that of Phosphatidylinositol 3,4,5-trisphosphate 3-phosphatase ptn1 (ptn1) from Schizosaccharomyces pombe (strain 972 / ATCC 24843) (Fission yeast).